The primary structure comprises 1260 residues: Ankyrin repeat and sterile alpha motif domain-containing protein 1B (1260 aa).

ANK repeat units follow at residues 2–31, 58–87, 91–120, 127–156, 160–189, 193–222, and 225–254; these read GKDQ…GGIL, SGYT…STNV, KGYF…SHSR, ENET…DPTI, KLET…NLMS, RKHT…DVSC, and EKGS…DANI. Residues 298 to 326 are disordered; the sequence is HAQEDTAQETRLSSPAQSPSQKTKSETVT. Residues 306-326 are compositionally biased toward polar residues; that stretch reads ETRLSSPAQSPSQKTKSETVT. Residues Ser-310, Ser-311, Ser-315, Ser-354, and Ser-365 each carry the phosphoserine modification. Disordered stretches follow at residues 368 to 402, 491 to 513, and 556 to 642; these read ELGK…SCGP, PGTG…PSPD, and GCTS…EASL. A compositionally biased stretch (polar residues) spans 372–385; it reads NGSQSVRTSSTINL. Thr-504 carries the post-translational modification Phosphothreonine. Residues Ser-508 and Ser-511 each carry the phosphoserine modification. Low complexity predominate over residues 556-575; sequence GCTSFTSSPPVSPPTSSVET. Positions 576–588 are enriched in basic and acidic residues; that stretch reads TEIKNEGAEHTDD. Phosphoserine is present on Ser-739. The disordered stretch occupies residues 754–778; that stretch reads VNWSKSSTAERSSKDNSERTPSFTS. Thr-773 bears the Phosphothreonine mark. Ser-775 carries the phosphoserine modification. SAM domains are found at residues 810-876 and 884-949; these read CPVQ…LPKM and YHPT…RLHE. Residue Tyr-901 is modified to Phosphotyrosine. A Nuclear localization signal motif is present at residues 935-938; that stretch reads HRKR. A disordered region spans residues 946 to 989; sequence RLHEDPPQKPPRSITLREPSGNHTPPQLSPSLSQSTYTTGGSLD. Residues 969–984 show a composition bias toward low complexity; sequence TPPQLSPSLSQSTYTT. Position 974 is a phosphoserine (Ser-974). The residue at position 1007 (Tyr-1007) is a Phosphotyrosine. Residues 1056–1213 enclose the PID domain; it reads IFQSCDYKAF…SFENKPSKPI (158 aa). Residues 1197–1217 form a disordered region; sequence HSSTLPESFENKPSKPIPKPR.

Interacts with EPHA8. Isoform 2 interacts with COIL. Isoform 3 interacts with DLG4. In terms of processing, nuclear translocation of isoform 3 requires an NMDAR-dependent proteolytic cleavage. A 35 kDa N-terminal form shuttles to the nucleus. Isoform 3 is brain specific and highly enriched in the postsynaptic densities (PSDs), especially in cortical, striatal and hippocampal PSDs.

The protein localises to the cytoplasm. Its subcellular location is the nucleus. The protein resides in the postsynaptic density. It localises to the cell projection. It is found in the dendritic spine. The protein localises to the cajal body. In terms of biological role, isoform 2 may participate in the regulation of nucleoplasmic coilin protein interactions in neuronal and transformed cells. Its function is as follows. Isoform 3 can regulate global protein synthesis by altering nucleolar numbers. The protein is Ankyrin repeat and sterile alpha motif domain-containing protein 1B (Anks1b) of Rattus norvegicus (Rat).